Reading from the N-terminus, the 445-residue chain is MNGTLADQLQSHLANYGQPMVNSQRNEDPSMYMNGSAASVSHTNGSSSMGNDQKFPSYKRMAQRRKVPEGELCAVCSDLATGYHYGVASCNGCKTFFRRTIVSEQTFICQYNGNCDVNKNIRCACRHCRFNKCLLVGMDAKALQIPAIQNDRDRIGPTKKIKMSSGSDDEQATTPHRLQDQEIIDQLTQVEGLCQELRRCIIPEVTGVTHALTSPCLLFETTDLKVDVSLTNTIFKELFPASMNDIRMWNIREMRICIEWAKTFDVYQRLNLFDQFALVRNFAFAFNLLNRVFYSPDHGPDKIVFQNGAFIMRQPQQQVQLSGCRPIYTRQMDEIMIPFRKLQLSVAEFATFKAALFFNPDALDLSPQAKQEVFEERNKYLGGLFTCITQKIGIPTGVQKYGSLLMMTASIQNILAQNEENMQVMELFKNWEVDPFVKELCMKRA.

Residues 19 to 55 (PMVNSQRNEDPSMYMNGSAASVSHTNGSSSMGNDQKF) are disordered. Residues 36–51 (SAASVSHTNGSSSMGN) are compositionally biased toward polar residues. The nuclear receptor DNA-binding region spans 70–145 (GELCAVCSDL…VGMDAKALQI (76 aa)). 2 NR C4-type zinc fingers span residues 73–93 (CAVC…CNGC) and 109–133 (CQYN…FNKC). One can recognise an NR LBD domain in the interval 179 to 444 (QDQEIIDQLT…PFVKELCMKR (266 aa)).

This sequence belongs to the nuclear hormone receptor family.

The protein localises to the nucleus. Orphan nuclear receptor which acts in concert with the insulin/IGF-1-like signaling (IIS) pathway during osmotic stress, perhaps in response to a ligand modified by the sulfotransferase ssu-1. This is Nuclear hormone receptor family member nhr-1 (nhr-1) from Caenorhabditis elegans.